The following is a 298-amino-acid chain: Isochorismatase domain-containing protein 1 (298 aa).

Tyr-160 carries the post-translational modification Phosphotyrosine. Lys-279 is subject to N6-succinyllysine.

This sequence belongs to the isochorismatase family.

This chain is Isochorismatase domain-containing protein 1 (ISOC1), found in Homo sapiens (Human).